The following is a 456-amino-acid chain: UDP-N-acetylmuramoylalanine--D-glutamate ligase (456 aa).

119–125 (GTNGKTT) contacts ATP.

Belongs to the MurCDEF family.

It is found in the cytoplasm. The catalysed reaction is UDP-N-acetyl-alpha-D-muramoyl-L-alanine + D-glutamate + ATP = UDP-N-acetyl-alpha-D-muramoyl-L-alanyl-D-glutamate + ADP + phosphate + H(+). The protein operates within cell wall biogenesis; peptidoglycan biosynthesis. In terms of biological role, cell wall formation. Catalyzes the addition of glutamate to the nucleotide precursor UDP-N-acetylmuramoyl-L-alanine (UMA). The protein is UDP-N-acetylmuramoylalanine--D-glutamate ligase (murD) of Enterococcus faecalis (strain ATCC 700802 / V583).